The primary structure comprises 82 residues: ATP synthase subunit c, chloroplastic (82 aa).

2 helical membrane passes run 3–23 (PLIA…AAIG) and 57–77 (FAFM…LLFA).

It belongs to the ATPase C chain family. In terms of assembly, F-type ATPases have 2 components, F(1) - the catalytic core - and F(0) - the membrane proton channel. F(1) has five subunits: alpha(3), beta(3), gamma(1), delta(1), epsilon(1). F(0) has four main subunits: a(1), b(1), b'(1) and c(10-14). The alpha and beta chains form an alternating ring which encloses part of the gamma chain. F(1) is attached to F(0) by a central stalk formed by the gamma and epsilon chains, while a peripheral stalk is formed by the delta, b and b' chains.

The protein localises to the plastid. It is found in the chloroplast thylakoid membrane. Its function is as follows. F(1)F(0) ATP synthase produces ATP from ADP in the presence of a proton or sodium gradient. F-type ATPases consist of two structural domains, F(1) containing the extramembraneous catalytic core and F(0) containing the membrane proton channel, linked together by a central stalk and a peripheral stalk. During catalysis, ATP synthesis in the catalytic domain of F(1) is coupled via a rotary mechanism of the central stalk subunits to proton translocation. In terms of biological role, key component of the F(0) channel; it plays a direct role in translocation across the membrane. A homomeric c-ring of between 10-14 subunits forms the central stalk rotor element with the F(1) delta and epsilon subunits. This is ATP synthase subunit c, chloroplastic from Oltmannsiellopsis viridis (Marine flagellate).